Here is a 139-residue protein sequence, read N- to C-terminus: MSAEFTYQDVAEHNTKKDLYVVIHDKVYDITKFVDEHPGGEEVLLDVAGQDSTEAFEDVGHSDEAREALEPLLVGTLKRQAGDPKPKAPLPSSLAPAAQTGTATGLGIGLYAVLVLGGLAGFAAYQYLQAQQGATAPSA.

Residues Ser-2–Lys-78 enclose the Cytochrome b5 heme-binding domain. The heme site is built by His-37 and His-61. The chain crosses the membrane as a helical span at residues Gly-105–Tyr-125.

The protein belongs to the cytochrome b5 family.

The protein resides in the endoplasmic reticulum membrane. It localises to the microsome membrane. In terms of biological role, membrane bound hemoprotein which function as an electron carrier for several membrane bound oxygenases. The chain is Probable cytochrome b5 from Neurospora crassa (strain ATCC 24698 / 74-OR23-1A / CBS 708.71 / DSM 1257 / FGSC 987).